We begin with the raw amino-acid sequence, 351 residues long: Phenoloxidase-activating factor 3 (351 aa).

The signal sequence occupies residues 1-19 (MWLSLVILGVASAIVNVST). N-linked (GlcNAc...) asparagine glycosylation occurs at Asn16. Residues 22-73 (SCTTPNGETATCLPIESCKIFWDYVVTSGADPEINSFLRASLCRQGNYVVCC) enclose the Clip domain. 8 disulfide bridges follow: Cys23–Cys72, Cys33–Cys64, Cys39–Cys73, Cys89–Cys224, Cys127–Cys143, Cys167–Cys176, Cys268–Cys285, and Cys295–Cys326. The Peptidase S1 domain occupies 97–350 (VLGGEDTDLG…HLDWIKQNVR (254 aa)). The Charge relay system role is filled by His142. 4 residues coordinate Ca(2+): Glu158, Asp160, Ala163, and Asp166. Residue Asp204 is the Charge relay system of the active site. Catalysis depends on Ser299, which acts as the Charge relay system.

The protein belongs to the peptidase S1 family. CLIP subfamily. In the active form, heterodimer of a light chain and a heavy chain; disulfide-linked. Post-translationally, proteolytically cleaved.

Its subcellular location is the secreted. Its activity is regulated as follows. Cleavage of PPAF2 is Ca(2+)-independent. Inhibited by heparin. In terms of biological role, serine endopeptidase which, by cleaving prophenoloxidase activating factor PPAF2, is required for the activation of the prophenoloxidase cascade probably following the recognition of pathogen-derived products. The protein is Phenoloxidase-activating factor 3 of Holotrichia diomphalia (Korean black chafer).